The sequence spans 1020 residues: Glucan endo-1,3-beta-D-glucosidase (1020 aa).

Residues M1–A25 form the signal peptide. The segment at H28–P251 is beta-sandwich subdomain. The 695-residue stretch at H28–G722 folds into the GH81 domain. Positions E252 to T350 are alpha/beta subdomain. The segment at D360–G722 is (alpha/beta)6 barrel subdomain. Positions 387, 391, 458, 466, 470, 530, 540, 542, 546, 699, and 704 each coordinate (1,3-beta-D-glucosyl)n. D466 is a catalytic residue. Active-site residues include E542 and E546. The interval H771–D790 is disordered. Positions E796–R922 constitute a CBM6 domain. Residues E812, W825, D853, N878, D912, and N915 each coordinate (1,3-beta-D-glucosyl)n. The 93-residue stretch at N928–R1020 folds into the CBM56 domain.

It belongs to the glycosyl hydrolase 81 family.

It localises to the secreted. The catalysed reaction is Hydrolysis of (1-&gt;3)-beta-D-glucosidic linkages in (1-&gt;3)-beta-D-glucans.. In terms of biological role, cleaves internal linkages in 1,3-beta-glucan. May contribute to plant biomass degradation. The sequence is that of Glucan endo-1,3-beta-D-glucosidase from Halalkalibacterium halodurans (strain ATCC BAA-125 / DSM 18197 / FERM 7344 / JCM 9153 / C-125) (Bacillus halodurans).